Here is a 325-residue protein sequence, read N- to C-terminus: Delta(1)-pyrroline-2-carboxylate reductase (325 aa).

This sequence belongs to the ornithine cyclodeaminase/mu-crystallin family.

The catalysed reaction is L-proline + NAD(+) = 1-pyrroline-2-carboxylate + NADH + H(+). The enzyme catalyses L-proline + NADP(+) = 1-pyrroline-2-carboxylate + NADPH + H(+). Functionally, catalyzes the reduction of Delta(1)-pyrroline-2-carboxylate (Pyr2C) to L-proline, using preferentially NADPH over NADH as the electron donor. Is likely involved in a degradation pathway that converts trans-3-hydroxy-L-proline (t3LHyp) to L-proline. This Bacillus thuringiensis subsp. konkukian (strain 97-27) protein is Delta(1)-pyrroline-2-carboxylate reductase.